The following is a 399-amino-acid chain: Inositol polyphosphate 1-phosphatase (399 aa).

Asp-54 contacts Li(+). Glu-79 provides a ligand contact to Mg(2+). Glu-80 is a Li(+) binding site. Residues Asp-153 and Ile-155 each contribute to the Mg(2+) site. Residues Asp-156, Ser-157, Thr-158, Ser-267, Lys-269, Gly-289, Ala-290, Lys-293, and Thr-311 each coordinate 1D-myo-inositol 1,4-bisphosphate. A Mg(2+)-binding site is contributed by Asp-316. Position 317 is a phosphoserine (Ser-317).

The protein belongs to the inositol monophosphatase superfamily. In terms of assembly, monomer. Requires Mg(2+) as cofactor. In terms of tissue distribution, ubiquitously expressed, with highest levels in pancreas and kidney.

The enzyme catalyses 1D-myo-inositol 1,4-bisphosphate + H2O = 1D-myo-inositol 4-phosphate + phosphate. It catalyses the reaction 1D-myo-inositol 1,3,4-trisphosphate + H2O = 1D-myo-inositol 3,4-bisphosphate + phosphate. It participates in signal transduction; phosphatidylinositol signaling pathway. Inhibited by Li(+). In terms of biological role, mg(2+)-dependent phosphatase that catalyzes the hydrolysis of the 1-position phosphate from inositol 1,4-bisphosphate and inositol 1,3,4-trisphosphate and participates in inositol phosphate metabolism. The chain is Inositol polyphosphate 1-phosphatase from Homo sapiens (Human).